Consider the following 239-residue polypeptide: Phosphoribosylaminoimidazole-succinocarboxamide synthase (239 aa).

This sequence belongs to the SAICAR synthetase family.

The enzyme catalyses 5-amino-1-(5-phospho-D-ribosyl)imidazole-4-carboxylate + L-aspartate + ATP = (2S)-2-[5-amino-1-(5-phospho-beta-D-ribosyl)imidazole-4-carboxamido]succinate + ADP + phosphate + 2 H(+). Its pathway is purine metabolism; IMP biosynthesis via de novo pathway; 5-amino-1-(5-phospho-D-ribosyl)imidazole-4-carboxamide from 5-amino-1-(5-phospho-D-ribosyl)imidazole-4-carboxylate: step 1/2. The chain is Phosphoribosylaminoimidazole-succinocarboxamide synthase from Acinetobacter baylyi (strain ATCC 33305 / BD413 / ADP1).